The following is a 259-amino-acid chain: Hemin import ATP-binding protein HmuV (259 aa).

Residues 6 to 242 (IQGRDLCVTY…ERIEQVYGYQ (237 aa)) form the ABC transporter domain. Residue 38–45 (GPNGAGKS) participates in ATP binding.

The protein belongs to the ABC transporter superfamily. Heme (hemin) importer (TC 3.A.1.14.5) family. The complex is composed of two ATP-binding proteins (HmuV), two transmembrane proteins (HmuU) and a solute-binding protein (HmuT).

It is found in the cell inner membrane. Functionally, part of the ABC transporter complex HmuTUV involved in hemin import. Responsible for energy coupling to the transport system. This is Hemin import ATP-binding protein HmuV from Vibrio cholerae serotype O1 (strain ATCC 39315 / El Tor Inaba N16961).